We begin with the raw amino-acid sequence, 245 residues long: Orotidine 5'-phosphate decarboxylase (245 aa).

Substrate contacts are provided by residues aspartate 22, lysine 44, 71 to 80 (DLKFHDIPNT), threonine 131, arginine 192, glutamine 201, glycine 221, and arginine 222. Lysine 73 serves as the catalytic Proton donor.

This sequence belongs to the OMP decarboxylase family. Type 1 subfamily. Homodimer.

It carries out the reaction orotidine 5'-phosphate + H(+) = UMP + CO2. It participates in pyrimidine metabolism; UMP biosynthesis via de novo pathway; UMP from orotate: step 2/2. Catalyzes the decarboxylation of orotidine 5'-monophosphate (OMP) to uridine 5'-monophosphate (UMP). This is Orotidine 5'-phosphate decarboxylase from Yersinia pseudotuberculosis serotype O:1b (strain IP 31758).